We begin with the raw amino-acid sequence, 333 residues long: MAILVLGGAGYIGSHMVDRLIEKGEEEVVVVDSLVTGHRAAVHPAAKFYQGDLADREFMSMVFRENPDVDAVIHFAAYSLVAESMKKPLKYFDNNTAGMIKLLEVMSEFGVKYIVFSSTAATYGIPDEIPIKETTPQRPINPYGESKLMMETIMKWSDRAYGIKFVPLRYFNVAGAKPDGSIGEDHSPETHLLPIILQVAQGVREKIMIFGDDYNTPDGTNVRDYVHPFDLADAHLLALNYLRQGNPSTAFNLGSSTGFSNLQILEAARKVTGQKIPAEKAARRSGDPDTLIASSEKAREVLGWKPQFDDIEKIIASAWAWHSSYPKGYDDRD.

NAD(+) contacts are provided by residues 11–12 (YI), 32–37 (DSLVTG), 52–53 (DL), 75–79 (FAAYS), Asn94, Thr119, Tyr143, Lys147, and Phe171. Residues Thr119 and Tyr143 each contribute to the substrate site. Residue Tyr143 is the Proton acceptor of the active site. Substrate contacts are provided by residues Asn172, 191 to 192 (HL), 208 to 210 (MIF), Arg223, and 284 to 287 (RSGD).

Belongs to the NAD(P)-dependent epimerase/dehydratase family. In terms of assembly, homodimer. It depends on NAD(+) as a cofactor.

It catalyses the reaction UDP-alpha-D-glucose = UDP-alpha-D-galactose. The protein operates within carbohydrate metabolism; galactose metabolism. Functionally, involved in the metabolism of galactose. Catalyzes the conversion of UDP-galactose (UDP-Gal) to UDP-glucose (UDP-Glc) through a mechanism involving the transient reduction of NAD. In Streptococcus mutans serotype c (strain ATCC 700610 / UA159), this protein is UDP-glucose 4-epimerase (galE).